Consider the following 296-residue polypeptide: Calponin-2 (296 aa).

Serine 2 bears the N-acetylserine mark. Lysine 8 and lysine 25 each carry N6-acetyllysine. Residues 28 to 132 form the Calponin-homology (CH) domain; it reads PQKEAELRSW…SLLALAGKAK (105 aa). Serine 138 is subject to Phosphoserine. Calponin-like repeat units lie at residues 166–191, 206–231, and 245–269; these read IGLQ…RHLY, ISLQ…RHIY, and MSLQ…RQIY. The tract at residues 275–296 is disordered; the sequence is PQGPAADGAPAAAGDCPGPGES.

This sequence belongs to the calponin family. As to expression, smooth muscle, and tissues containing significant amounts of smooth muscle.

Thin filament-associated protein that is implicated in the regulation and modulation of smooth muscle contraction. It is capable of binding to actin, calmodulin and tropomyosin. The interaction of calponin with actin inhibits the actomyosin Mg-ATPase activity. This is Calponin-2 (CNN2) from Sus scrofa (Pig).